Reading from the N-terminus, the 554-residue chain is Phenylalanine--tRNA ligase beta subunit (554 aa).

Residues 276-351 enclose the B5 domain; sequence LTPRYREISI…KNHGYEKFEG (76 aa). Positions 329, 335, 338, and 339 each coordinate Mg(2+).

Belongs to the phenylalanyl-tRNA synthetase beta subunit family. Type 2 subfamily. In terms of assembly, tetramer of two alpha and two beta subunits. The cofactor is Mg(2+).

It is found in the cytoplasm. It catalyses the reaction tRNA(Phe) + L-phenylalanine + ATP = L-phenylalanyl-tRNA(Phe) + AMP + diphosphate + H(+). The protein is Phenylalanine--tRNA ligase beta subunit of Methanococcus vannielii (strain ATCC 35089 / DSM 1224 / JCM 13029 / OCM 148 / SB).